Reading from the N-terminus, the 154-residue chain is Interleukin-2 (154 aa).

A signal peptide spans 1-20 (MYRMQLLSCIALSLALVTNS). The O-linked (GalNAc...) threonine glycan is linked to T23. C78 and C126 are joined by a disulfide.

It belongs to the IL-2 family.

It localises to the secreted. Its function is as follows. Cytokine produced by activated CD4-positive helper T-cells and to a lesser extend activated CD8-positive T-cells and natural killer (NK) cells that plays pivotal roles in the immune response and tolerance. Binds to a receptor complex composed of either the high-affinity trimeric IL-2R (IL2RA/CD25, IL2RB/CD122 and IL2RG/CD132) or the low-affinity dimeric IL-2R (IL2RB and IL2RG). Interaction with the receptor leads to oligomerization and conformation changes in the IL-2R subunits resulting in downstream signaling starting with phosphorylation of JAK1 and JAK3. In turn, JAK1 and JAK3 phosphorylate the receptor to form a docking site leading to the phosphorylation of several substrates including STAT5. This process leads to activation of several pathways including STAT, phosphoinositide-3-kinase/PI3K and mitogen-activated protein kinase/MAPK pathways. Functions as a T-cell growth factor and can increase NK-cell cytolytic activity as well. Promotes strong proliferation of activated B-cells and subsequently immunoglobulin production. Plays a pivotal role in regulating the adaptive immune system by controlling the survival and proliferation of regulatory T-cells, which are required for the maintenance of immune tolerance. Moreover, participates in the differentiation and homeostasis of effector T-cell subsets, including Th1, Th2, Th17 as well as memory CD8-positive T-cells. This is Interleukin-2 (IL2) from Macaca mulatta (Rhesus macaque).